Here is a 42-residue protein sequence, read N- to C-terminus: Crotamine Ile-19 (42 aa).

Cystine bridges form between Cys-4/Cys-36, Cys-11/Cys-30, and Cys-18/Cys-37.

Belongs to the crotamine-myotoxin family. In terms of assembly, monomer. As to expression, expressed by the venom gland.

Its subcellular location is the secreted. Its function is as follows. Cationic peptide that possesses multiple functions. It acts as a cell-penetrating peptide (CPP), and as a potent voltage-gated potassium channel (Kv) inhibitor, it induces severe muscle necrosis by a non-enzymatic mechanism and exhibits antimicrobial activities. It also elicits a short-lasting hyperextension of the hind limb. It does not cause observable tissue damage (whereas the whole venom causes severe myonecrosis accompanied by edema and hemorrhage). This is Crotamine Ile-19 from Crotalus durissus ruruima (South American rattlesnake).